Consider the following 804-residue polypeptide: Leucine--tRNA ligase (804 aa).

Residues 40-51 (PYPSGAGLHVGH) carry the 'HIGH' region motif. Positions 576 to 580 (KMSKS) match the 'KMSKS' region motif. K579 is a binding site for ATP.

Belongs to the class-I aminoacyl-tRNA synthetase family.

The protein localises to the cytoplasm. It catalyses the reaction tRNA(Leu) + L-leucine + ATP = L-leucyl-tRNA(Leu) + AMP + diphosphate. In Staphylococcus saprophyticus subsp. saprophyticus (strain ATCC 15305 / DSM 20229 / NCIMB 8711 / NCTC 7292 / S-41), this protein is Leucine--tRNA ligase.